Consider the following 323-residue polypeptide: Sphingolipid delta(4)-desaturase/C4-monooxygenase DES2 (323 aa).

Residue G2 is the site of N-myristoyl glycine attachment. A run of 2 helical transmembrane segments spans residues 41–61 and 68–88; these read PNIK…CWLV and WLLF…TLAI. Residues 89–93 carry the Histidine box-1 motif; it reads HDISH. Residues 95-99 are required for C4-hydroxylase activity; the sequence is TAFGT. The Histidine box-2 motif lies at 128 to 132; that stretch reads HVDHH. The chain crosses the membrane as a helical span at residues 200–220; sequence IFALWGIKAIVYLLASSLLGL. The short motif at 259 to 263 is the Histidine box-3 element; it reads HVEHH.

The protein belongs to the fatty acid desaturase type 1 family. DEGS subfamily.

Its subcellular location is the endoplasmic reticulum membrane. It carries out the reaction a dihydroceramide + 2 Fe(II)-[cytochrome b5] + O2 + 2 H(+) = a phytoceramide + 2 Fe(III)-[cytochrome b5] + H2O. The enzyme catalyses an N-acylsphinganine + 2 Fe(II)-[cytochrome b5] + O2 + 2 H(+) = an N-acylsphing-4-enine + 2 Fe(III)-[cytochrome b5] + 2 H2O. The catalysed reaction is N-octanoylsphinganine + 2 Fe(II)-[cytochrome b5] + O2 + 2 H(+) = N-octanoyl-4-hydroxysphinganine + 2 Fe(III)-[cytochrome b5] + H2O. It catalyses the reaction an N-acylsphinganine + 2 Fe(II)-[cytochrome b5] + O2 + 2 H(+) = an N-acyl-(4R)-4-hydroxysphinganine + 2 Fe(III)-[cytochrome b5] + H2O. It participates in membrane lipid metabolism; sphingolipid biosynthesis. In terms of biological role, bifunctional enzyme which acts both as a sphingolipid delta(4)-desaturase and a sphingolipid C4-monooxygenase. This chain is Sphingolipid delta(4)-desaturase/C4-monooxygenase DES2, found in Rattus norvegicus (Rat).